We begin with the raw amino-acid sequence, 182 residues long: Oligoribonuclease (182 aa).

One can recognise an Exonuclease domain in the interval leucine 8–leucine 171. Tyrosine 129 is a catalytic residue.

It belongs to the oligoribonuclease family.

It localises to the cytoplasm. In terms of biological role, 3'-to-5' exoribonuclease specific for small oligoribonucleotides. This is Oligoribonuclease from Actinobacillus succinogenes (strain ATCC 55618 / DSM 22257 / CCUG 43843 / 130Z).